We begin with the raw amino-acid sequence, 459 residues long: Sulfite oxidase (459 aa).

In terms of domain architecture, Cytochrome b5 heme-binding spans 4 to 83 (YPRYTREEVG…LQQYKVGELS (80 aa)). Positions 40, 65, and 69 each coordinate heme b. Positions 83-115 (SPDEAPAAPDAQDPFAGDPPRHPGLRVNSQKPF) are disordered. A compositionally biased stretch (low complexity) spans 85–100 (DEAPAAPDAQDPFAGD). The interval 86–95 (EAPAAPDAQD) is hinge. Residues 96-323 (PFAGDPPRHP…PSRWQQNDYK (228 aa)) are moco domain. Residues 136–140 (FTRNH), C185, D244, H283, R288, and 299–301 (SVK) contribute to the Mo-molybdopterin site. Positions 324–459 (GFSPCVDWDT…RGVLSTAWHR (136 aa)) are homodimerization.

In terms of assembly, homodimer. It depends on heme b as a cofactor. Mo-molybdopterin is required as a cofactor.

The protein localises to the mitochondrion intermembrane space. The enzyme catalyses sulfite + O2 + H2O = sulfate + H2O2. Its pathway is energy metabolism; sulfur metabolism. Its function is as follows. Catalyzes the oxidation of sulfite to sulfate, the terminal reaction in the oxidative degradation of sulfur-containing amino acids. The protein is Sulfite oxidase (SUOX) of Gallus gallus (Chicken).